A 449-amino-acid polypeptide reads, in one-letter code: Serine--tRNA ligase (449 aa).

255–257 contributes to the L-serine binding site; sequence TSE. Residue 286-288 coordinates ATP; it reads RSE. Glu309 provides a ligand contact to L-serine. 373–376 contacts ATP; it reads EISS. Ser409 contacts L-serine.

The protein belongs to the class-II aminoacyl-tRNA synthetase family. Type-1 seryl-tRNA synthetase subfamily. As to quaternary structure, homodimer. The tRNA molecule binds across the dimer.

The protein resides in the cytoplasm. It catalyses the reaction tRNA(Ser) + L-serine + ATP = L-seryl-tRNA(Ser) + AMP + diphosphate + H(+). It carries out the reaction tRNA(Sec) + L-serine + ATP = L-seryl-tRNA(Sec) + AMP + diphosphate + H(+). Its pathway is aminoacyl-tRNA biosynthesis; selenocysteinyl-tRNA(Sec) biosynthesis; L-seryl-tRNA(Sec) from L-serine and tRNA(Sec): step 1/1. Its function is as follows. Catalyzes the attachment of serine to tRNA(Ser). Is also able to aminoacylate tRNA(Sec) with serine, to form the misacylated tRNA L-seryl-tRNA(Sec), which will be further converted into selenocysteinyl-tRNA(Sec). The protein is Serine--tRNA ligase of Bordetella avium (strain 197N).